A 455-amino-acid polypeptide reads, in one-letter code: Fumarate hydratase class II (455 aa).

Substrate-binding positions include 96 to 98 (SGT), 122 to 125 (HPND), 132 to 134 (SSN), and Thr-180. The Proton donor/acceptor role is filled by His-181. Ser-311 is a catalytic residue. Residues Ser-312 and 317–319 (KVN) contribute to the substrate site.

This sequence belongs to the class-II fumarase/aspartase family. Fumarase subfamily. In terms of assembly, homotetramer.

The protein resides in the cytoplasm. It carries out the reaction (S)-malate = fumarate + H2O. The protein operates within carbohydrate metabolism; tricarboxylic acid cycle; (S)-malate from fumarate: step 1/1. In terms of biological role, involved in the TCA cycle. Catalyzes the stereospecific interconversion of fumarate to L-malate. The polypeptide is Fumarate hydratase class II (Listeria monocytogenes serotype 4b (strain F2365)).